The following is a 922-amino-acid chain: Probable dipeptidyl-aminopeptidase B (922 aa).

A compositionally biased stretch (basic and acidic residues) spans 1-16; sequence MATEKGHSRDDEERVP. Positions 1 to 21 are disordered; that stretch reads MATEKGHSRDDEERVPLTRGS. Topologically, residues 1–99 are cytoplasmic; that stretch reads MATEKGHSRD…KPMHKSVKIA (99 aa). Residues 100 to 120 form a helical; Signal-anchor for type II membrane protein membrane-spanning segment; it reads LWSLLFLSLGGWSLAFVLFIF. Topologically, residues 121–922 are vacuolar; that stretch reads RSHDTYQTPI…AGLYKFKHLC (802 aa). Residues N135, N200, N351, and N574 are each glycosylated (N-linked (GlcNAc...) asparagine). Residue S756 is the Charge relay system of the active site. A glycan (N-linked (GlcNAc...) asparagine) is linked at N815. Residues D833 and H866 each act as charge relay system in the active site. N-linked (GlcNAc...) asparagine glycosylation occurs at N902.

Belongs to the peptidase S9B family.

The protein resides in the vacuole membrane. The enzyme catalyses Release of an N-terminal dipeptide, Xaa-Yaa-|-Zaa-, from a polypeptide, preferentially when Yaa is Pro, provided Zaa is neither Pro nor hydroxyproline.. Type IV dipeptidyl-peptidase which removes N-terminal dipeptides sequentially from polypeptides having unsubstituted N-termini provided that the penultimate residue is proline. The sequence is that of Probable dipeptidyl-aminopeptidase B (DAPB) from Ajellomyces capsulatus (strain NAm1 / WU24) (Darling's disease fungus).